A 337-amino-acid polypeptide reads, in one-letter code: Glucan endo-1,3-beta-glucosidase, basic isoform 1 (337 aa).

Residue glutamate 94 is the Proton donor of the active site. Glutamate 239 acts as the Nucleophile in catalysis. Positions 315–337 are cleaved as a propeptide — removed in mature form; the sequence is VSERVWDISAETNSTASSLISEM. Residue asparagine 327 is glycosylated (N-linked (GlcNAc...) asparagine).

Belongs to the glycosyl hydrolase 17 family.

The protein localises to the vacuole. The enzyme catalyses Hydrolysis of (1-&gt;3)-beta-D-glucosidic linkages in (1-&gt;3)-beta-D-glucans.. Is thought to be an important plant defense-related product against fungal pathogens. This is Glucan endo-1,3-beta-glucosidase, basic isoform 1 (GLUB1) from Solanum tuberosum (Potato).